The following is a 398-amino-acid chain: Probable L-tyrosine/L-aspartate decarboxylase (398 aa).

At Lys242 the chain carries N6-(pyridoxal phosphate)lysine.

The protein belongs to the group II decarboxylase family. MfnA subfamily. The cofactor is pyridoxal 5'-phosphate.

It carries out the reaction L-tyrosine + H(+) = tyramine + CO2. The catalysed reaction is L-aspartate + H(+) = beta-alanine + CO2. It participates in cofactor biosynthesis; methanofuran biosynthesis. It functions in the pathway cofactor biosynthesis; coenzyme A biosynthesis. In terms of biological role, catalyzes the decarboxylation of L-tyrosine to produce tyramine for methanofuran biosynthesis. Can also catalyze the decarboxylation of L-aspartate to produce beta-alanine for coenzyme A (CoA) biosynthesis. This Methanosarcina mazei (strain ATCC BAA-159 / DSM 3647 / Goe1 / Go1 / JCM 11833 / OCM 88) (Methanosarcina frisia) protein is Probable L-tyrosine/L-aspartate decarboxylase.